The following is a 65-amino-acid chain: uncharacterized protein (65 aa).

The Cytoplasmic segment spans residues 1-20 (MRFSNCFNKFKFCIGTEKKY). Residues 21–43 (SFPICTSTYTSFSLFACIWSIFI) form a helical membrane-spanning segment. Topologically, residues 44–65 (HISLNKSFIYQKSWYYSFFQNR) are extracellular.

The protein localises to the host membrane. This is an uncharacterized protein from Acidianus sp. F28 (AFV-2).